Consider the following 369-residue polypeptide: 3-dehydroquinate synthase (369 aa).

NAD(+) contacts are provided by residues 75 to 80 (DGEEHK), 109 to 113 (GVIGD), 133 to 134 (TT), Lys-146, Lys-155, and 173 to 176 (TLKT). Glu-188, His-251, and His-268 together coordinate Zn(2+).

Belongs to the sugar phosphate cyclases superfamily. Dehydroquinate synthase family. Co(2+) serves as cofactor. The cofactor is Zn(2+). Requires NAD(+) as cofactor.

Its subcellular location is the cytoplasm. It carries out the reaction 7-phospho-2-dehydro-3-deoxy-D-arabino-heptonate = 3-dehydroquinate + phosphate. It participates in metabolic intermediate biosynthesis; chorismate biosynthesis; chorismate from D-erythrose 4-phosphate and phosphoenolpyruvate: step 2/7. Functionally, catalyzes the conversion of 3-deoxy-D-arabino-heptulosonate 7-phosphate (DAHP) to dehydroquinate (DHQ). This chain is 3-dehydroquinate synthase, found in Legionella pneumophila (strain Lens).